Consider the following 303-residue polypeptide: Methionyl-tRNA formyltransferase (303 aa).

A (6S)-5,6,7,8-tetrahydrofolate-binding site is contributed by 111 to 114 (SLLP).

Belongs to the Fmt family.

It catalyses the reaction L-methionyl-tRNA(fMet) + (6R)-10-formyltetrahydrofolate = N-formyl-L-methionyl-tRNA(fMet) + (6S)-5,6,7,8-tetrahydrofolate + H(+). Functionally, attaches a formyl group to the free amino group of methionyl-tRNA(fMet). The formyl group appears to play a dual role in the initiator identity of N-formylmethionyl-tRNA by promoting its recognition by IF2 and preventing the misappropriation of this tRNA by the elongation apparatus. The sequence is that of Methionyl-tRNA formyltransferase from Ehrlichia chaffeensis (strain ATCC CRL-10679 / Arkansas).